We begin with the raw amino-acid sequence, 355 residues long: 3-dehydroquinate synthase (355 aa).

NAD(+) is bound by residues glycine 106–aspartate 110, threonine 130–serine 131, lysine 143, and lysine 152. Zn(2+)-binding residues include glutamate 185, histidine 246, and histidine 262.

It belongs to the sugar phosphate cyclases superfamily. Dehydroquinate synthase family. Co(2+) serves as cofactor. Requires Zn(2+) as cofactor. It depends on NAD(+) as a cofactor.

Its subcellular location is the cytoplasm. It carries out the reaction 7-phospho-2-dehydro-3-deoxy-D-arabino-heptonate = 3-dehydroquinate + phosphate. It functions in the pathway metabolic intermediate biosynthesis; chorismate biosynthesis; chorismate from D-erythrose 4-phosphate and phosphoenolpyruvate: step 2/7. Its function is as follows. Catalyzes the conversion of 3-deoxy-D-arabino-heptulosonate 7-phosphate (DAHP) to dehydroquinate (DHQ). This is 3-dehydroquinate synthase from Latilactobacillus sakei subsp. sakei (strain 23K) (Lactobacillus sakei subsp. sakei).